Consider the following 454-residue polypeptide: tRNA modification GTPase MnmE (454 aa).

(6S)-5-formyl-5,6,7,8-tetrahydrofolate-binding residues include Arg23, Glu80, and Lys120. Positions 216 to 377 constitute a TrmE-type G domain; sequence GMKVVIAGRP…LRNHLKQSMG (162 aa). Asn226 provides a ligand contact to K(+). Residues 226–231, 245–251, 270–273, 335–338, and 358–360 contribute to the GTP site; these read NAGKSS, TDIAGTT, DTAG, NKAD, and SAR. Ser230 serves as a coordination point for Mg(2+). Residues Thr245, Ile247, and Thr250 each coordinate K(+). Mg(2+) is bound at residue Thr251. Residue Lys454 coordinates (6S)-5-formyl-5,6,7,8-tetrahydrofolate.

It belongs to the TRAFAC class TrmE-Era-EngA-EngB-Septin-like GTPase superfamily. TrmE GTPase family. In terms of assembly, homodimer. Heterotetramer of two MnmE and two MnmG subunits. Requires K(+) as cofactor.

The protein resides in the cytoplasm. Exhibits a very high intrinsic GTPase hydrolysis rate. Involved in the addition of a carboxymethylaminomethyl (cmnm) group at the wobble position (U34) of certain tRNAs, forming tRNA-cmnm(5)s(2)U34. In Escherichia coli O17:K52:H18 (strain UMN026 / ExPEC), this protein is tRNA modification GTPase MnmE.